A 44-amino-acid chain; its full sequence is Photosystem I reaction center subunit IX (44 aa).

The helical transmembrane segment at 7–27 (YLSVAPVLATLWFGSLAGLLI) threads the bilayer.

It belongs to the PsaJ family.

The protein localises to the plastid. The protein resides in the chloroplast thylakoid membrane. Its function is as follows. May help in the organization of the PsaE and PsaF subunits. The protein is Photosystem I reaction center subunit IX of Illicium oligandrum (Star anise).